The sequence spans 223 residues: Deoxyribose-phosphate aldolase 2 (223 aa).

D89 functions as the Proton donor/acceptor in the catalytic mechanism. The Schiff-base intermediate with acetaldehyde role is filled by K152. The Proton donor/acceptor role is filled by K181.

It belongs to the DeoC/FbaB aldolase family. DeoC type 1 subfamily.

The protein localises to the cytoplasm. It catalyses the reaction 2-deoxy-D-ribose 5-phosphate = D-glyceraldehyde 3-phosphate + acetaldehyde. It functions in the pathway carbohydrate degradation; 2-deoxy-D-ribose 1-phosphate degradation; D-glyceraldehyde 3-phosphate and acetaldehyde from 2-deoxy-alpha-D-ribose 1-phosphate: step 2/2. Functionally, catalyzes a reversible aldol reaction between acetaldehyde and D-glyceraldehyde 3-phosphate to generate 2-deoxy-D-ribose 5-phosphate. The protein is Deoxyribose-phosphate aldolase 2 of Bacillus licheniformis (strain ATCC 14580 / DSM 13 / JCM 2505 / CCUG 7422 / NBRC 12200 / NCIMB 9375 / NCTC 10341 / NRRL NRS-1264 / Gibson 46).